The following is a 525-amino-acid chain: MELGPEPPHRRRLLFTCSPTPAPQPTGKVQFGASRAGGLSPVTNLTVTMDQLEGLGSDYEKPMDVRNSSSLQRMGSSESTDSGFCLDSPGPLDSKENLEISLRRINCLPQKLLGCSPALKRSHSDSLDHDIFQLIDQDENKENEAFEFKKPIRPASRGCLNAHVHEESKDPFTHRQNSAPARMLSSNESDISESGNFSPLFTPQSPVKASLSDEDDGFIDLLDGENLKNDEETPSCMSSLWTAPLVMRRPTNLADRCGLFDSPSPCSSTSSCSTRAVKRADRSHEESPRGTKRRKSSEASPVKADVPEPTQLPHQSLSLTSFPKGTIENIFHSDPRDLIGDFSKGYLFHTVSGKHQDLKYISPEIMASVLNGKFANLIKEFVIIDCRYPYEYEGGHIKGAVNLHMEEEVEEFLLKKPIVPADGKRVIVVFHCEFSSERGPRMCRYVRERDRLGNEYPKLHYPELYVLKGGYKEFFLKCQSHCEPPSYRPMHHEDFKEDLKKFRTKSRTWAGEKSKREMYSRLKKL.

Residues 1–42 are disordered; the sequence is MELGPEPPHRRRLLFTCSPTPAPQPTGKVQFGASRAGGLSPV. Residues 74 to 84 carry the Phosphodegron motif; sequence MGSSESTDSGF. At Ser-76 the chain carries Phosphoserine; by CHEK1. Phosphoserine; by NEK11 is present on residues Ser-79, Ser-82, and Ser-88. Ser-124 is subject to Phosphoserine; by CHEK1 and CHEK2. Residues 141-143 carry the KEN box motif; sequence KEN. Residue Ser-178 is modified to Phosphoserine; by CHEK1. The interval 260–318 is disordered; the sequence is FDSPSPCSSTSSCSTRAVKRADRSHEESPRGTKRRKSSEASPVKADVPEPTQLPHQSLS. A compositionally biased stretch (low complexity) spans 262 to 274; sequence SPSPCSSTSSCST. Basic and acidic residues predominate over residues 278-289; it reads KRADRSHEESPR. 2 positions are modified to phosphoserine; by CHEK1 and CHEK2: Ser-283 and Ser-296. The region spanning 377 to 483 is the Rhodanese domain; the sequence is LIKEFVIIDC…FFLKCQSHCE (107 aa). Cys-432 is a catalytic residue. Residue Thr-508 is modified to Phosphothreonine; by CHEK1. Phosphoserine; by PLK3 is present on residues Ser-514 and Ser-520.

It belongs to the MPI phosphatase family. As to quaternary structure, interacts with CCNB1/cyclin B1. Interacts with YWHAE/14-3-3 epsilon when phosphorylated. Interacts with CUL1 specifically when CUL1 is neddylated and active. Interacts with BTRC/BTRCP1 and FBXW11/BTRCP2. Interactions with CUL1, BTRC and FBXW11 are enhanced upon DNA damage. Interacts with CHEK2; mediates CDC25A phosphorylation and degradation in response to infrared-induced DNA damages. Interacts with HSP90AB1; prevents heat shock-mediated CDC25A degradation and contributes to cell cycle progression. Post-translationally, phosphorylated by CHEK1 on Ser-76, Ser-124, Ser-178, Ser-283, Ser-296 and Thr-508 during checkpoint mediated cell cycle arrest. Also phosphorylated by CHEK2 on Ser-124, Ser-283, and Ser-296 during checkpoint mediated cell cycle arrest. Phosphorylation on Ser-178 and Thr-508 creates binding sites for YWHAE/14-3-3 epsilon which inhibits CDC25A. Phosphorylation on Ser-76, Ser-124, Ser-178, Ser-283 and Ser-296 may also promote ubiquitin-dependent proteolysis of CDC25A by the SCF complex. Phosphorylation of CDC25A at Ser-76 by CHEK1 primes it for subsequent phosphorylation at Ser-79, Ser-82 and Ser-88 by NEK11. Phosphorylation by NEK11 is required for BTRC-mediated polyubiquitination and degradation. Phosphorylation by PIM1 leads to an increase in phosphatase activity. Phosphorylated by PLK3 following DNA damage, leading to promote its ubiquitination and degradation. In terms of processing, ubiquitinated by the anaphase promoting complex/cyclosome (APC/C) ubiquitin ligase complex that contains FZR1/CDH1 during G1 phase leading to its degradation by the proteasome. Ubiquitinated by a SCF complex containing BTRC and FBXW11 during S phase leading to its degradation by the proteasome. Deubiquitination by USP17L2/DUB3 leads to its stabilization.

It carries out the reaction O-phospho-L-tyrosyl-[protein] + H2O = L-tyrosyl-[protein] + phosphate. With respect to regulation, stimulated by B-type cyclins. Stimulated by PIM1-mediated phosphorylation. Functionally, tyrosine protein phosphatase which functions as a dosage-dependent inducer of mitotic progression. Directly dephosphorylates CDK1 and stimulates its kinase activity. Also dephosphorylates CDK2 in complex with cyclin-E, in vitro. This is M-phase inducer phosphatase 1 (Cdc25a) from Rattus norvegicus (Rat).